Reading from the N-terminus, the 356-residue chain is Guanine nucleotide-binding protein alpha-17 subunit (356 aa).

G2 carries N-myristoyl glycine lipidation. The S-palmitoyl cysteine moiety is linked to residue C4. The G-alpha domain maps to 32-356 (SIVKLLLLGA…QKNLQKAGMM (325 aa)). Positions 35–48 (KLLLLGAGECGKST) are G1 motif. Residues 40-47 (GAGECGKS), 177-183 (LYSRVAT), 202-206 (DVGGQ), 271-274 (NKKD), and A328 contribute to the GTP site. Residues S47 and T183 each coordinate Mg(2+). Positions 175–183 (DILYSRVAT) are G2 motif. Positions 198 to 207 (FRVFDVGGQR) are G3 motif. The tract at residues 267–274 (ILFMNKKD) is G4 motif. Positions 326–331 (TCATDT) are G5 motif.

Belongs to the G-alpha family. As to quaternary structure, g proteins are composed of 3 units; alpha, beta and gamma. The alpha chain contains the guanine nucleotide binding site.

The protein resides in the cell projection. The protein localises to the cilium. It localises to the dendrite. Guanine nucleotide-binding proteins (G proteins) are involved as modulators or transducers in various transmembrane signaling systems. This specific G-alpha subunit plays an important role in olfaction and in cilia morphogenesis. Involved in chemotactic responses to attractants diacetyl, pyrazine, 2,4,5-trimethylthiazole, benzaldehyde, isoamyl alcohol, butanone and 2,3-pentanedione. Displays a redundant function with gpa-3 in chemotactic responses. Involved in avoidance responses to copper, sodium dodecyl sulfate and linoleic acid. Involved in osmotic avoidance and mechanosensory responses. Involved in specifying fan-like morphology of cilia of head sensory neurons AWC. The sequence is that of Guanine nucleotide-binding protein alpha-17 subunit (odr-3) from Caenorhabditis briggsae.